The following is a 307-amino-acid chain: Homoserine kinase (307 aa).

91–101 contacts ATP; sequence PLARGLGSSAA.

The protein belongs to the GHMP kinase family. Homoserine kinase subfamily.

It is found in the cytoplasm. It carries out the reaction L-homoserine + ATP = O-phospho-L-homoserine + ADP + H(+). The protein operates within amino-acid biosynthesis; L-threonine biosynthesis; L-threonine from L-aspartate: step 4/5. Functionally, catalyzes the ATP-dependent phosphorylation of L-homoserine to L-homoserine phosphate. This chain is Homoserine kinase, found in Deinococcus radiodurans (strain ATCC 13939 / DSM 20539 / JCM 16871 / CCUG 27074 / LMG 4051 / NBRC 15346 / NCIMB 9279 / VKM B-1422 / R1).